We begin with the raw amino-acid sequence, 120 residues long: Ribosome-binding factor A (120 aa).

This sequence belongs to the RbfA family. Monomer. Binds 30S ribosomal subunits, but not 50S ribosomal subunits or 70S ribosomes.

It is found in the cytoplasm. Its function is as follows. One of several proteins that assist in the late maturation steps of the functional core of the 30S ribosomal subunit. Associates with free 30S ribosomal subunits (but not with 30S subunits that are part of 70S ribosomes or polysomes). Required for efficient processing of 16S rRNA. May interact with the 5'-terminal helix region of 16S rRNA. This is Ribosome-binding factor A from Chlamydia felis (strain Fe/C-56) (Chlamydophila felis).